A 312-amino-acid polypeptide reads, in one-letter code: Malate dehydrogenase (312 aa).

NAD(+)-binding positions include 10 to 15 (GAGNTG) and aspartate 34. Arginine 85 and arginine 91 together coordinate substrate. NAD(+) contacts are provided by residues asparagine 98 and 121–123 (LTN). Residues asparagine 123 and arginine 154 each contribute to the substrate site. Residue histidine 178 is the Proton acceptor of the active site.

Belongs to the LDH/MDH superfamily. MDH type 3 family.

It catalyses the reaction (S)-malate + NAD(+) = oxaloacetate + NADH + H(+). Functionally, catalyzes the reversible oxidation of malate to oxaloacetate. This chain is Malate dehydrogenase, found in Staphylococcus saprophyticus subsp. saprophyticus (strain ATCC 15305 / DSM 20229 / NCIMB 8711 / NCTC 7292 / S-41).